Reading from the N-terminus, the 99-residue chain is Large ribosomal subunit protein bL28 (99 aa).

This sequence belongs to the bacterial ribosomal protein bL28 family.

In Brucella anthropi (strain ATCC 49188 / DSM 6882 / CCUG 24695 / JCM 21032 / LMG 3331 / NBRC 15819 / NCTC 12168 / Alc 37) (Ochrobactrum anthropi), this protein is Large ribosomal subunit protein bL28.